Consider the following 110-residue polypeptide: Bowman-Birk type proteinase inhibitor (110 aa).

The first 19 residues, 1–19, serve as a signal peptide directing secretion; it reads MVVLKVCLVLLFLVGGTTS. Positions 20-39 are excised as a propeptide; that stretch reads ANLRLSKLGLLMKSDHQHSN. Intrachain disulfides connect Cys47–Cys101, Cys48–Cys63, Cys51–Cys97, Cys53–Cys61, Cys71–Cys78, Cys75–Cys90, and Cys80–Cys88.

It belongs to the Bowman-Birk serine protease inhibitor family.

Its function is as follows. Inhibitor of trypsin and of chymotrypsin. The sequence is that of Bowman-Birk type proteinase inhibitor from Glycine max (Soybean).